The primary structure comprises 132 residues: Small ribosomal subunit protein uS8c (132 aa).

The protein belongs to the universal ribosomal protein uS8 family. Part of the 30S ribosomal subunit.

Its subcellular location is the plastid. It is found in the chloroplast. Functionally, one of the primary rRNA binding proteins, it binds directly to 16S rRNA central domain where it helps coordinate assembly of the platform of the 30S subunit. In Spirogyra maxima (Green alga), this protein is Small ribosomal subunit protein uS8c (rps8).